The primary structure comprises 390 residues: Complement decay-accelerating factor, GPI-anchored (390 aa).

Residues 1-34 (MIRGRAPRTRPSPPPPLLPLLSLSLLLLSPTVRG) form the signal peptide. Sushi domains lie at 35 to 96 (DCGP…FCEK), 97 to 160 (SCVA…FCKK), 161 to 222 (KSCP…VCTE), and 223 to 286 (IHCP…RCIE). 8 cysteine pairs are disulfide-bonded: cysteine 36/cysteine 81, cysteine 65/cysteine 94, cysteine 98/cysteine 145, cysteine 129/cysteine 158, cysteine 163/cysteine 204, cysteine 190/cysteine 220, cysteine 225/cysteine 267, and cysteine 253/cysteine 284. Asparagine 187 carries N-linked (GlcNAc...) asparagine glycosylation. Asparagine 262 carries N-linked (GlcNAc...) asparagine glycosylation. The tract at residues 273-362 (DVGQWSSPPP…STDKGEPNTG (90 aa)) is disordered. Polar residues-rich tracts occupy residues 298-319 (NVPSTGTPSTPQKPTTESVPNP) and 327-344 (KPSTVKVSATQHVPVTKT). Residue glycine 362 is the site of GPI-anchor amidated glycine attachment. A propeptide spans 363–390 (GDRYIYGHTCLITLTVLHVMLSLIGYLT) (removed in mature form).

This sequence belongs to the receptors of complement activation (RCA) family. In terms of tissue distribution, brain, secretory epithelia, skeletal muscle, liver, testes, thymus, spleen and lymph node.

It localises to the cell membrane. In terms of biological role, this protein recognizes C4b and C3b fragments that condense with cell-surface hydroxyl or amino groups when nascent C4b and C3b are locally generated during C4 and c3 activation. Interaction of daf with cell-associated C4b and C3b polypeptides interferes with their ability to catalyze the conversion of C2 and factor B to enzymatically active C2a and Bb and thereby prevents the formation of C4b2a and C3bBb, the amplification convertases of the complement cascade. Inhibits complement activation by destabilizing and preventing the formation of C3 and C5 convertases, which prevents complement damage. In Mus musculus (Mouse), this protein is Complement decay-accelerating factor, GPI-anchored (Cd55).